The primary structure comprises 530 residues: MTQTTPDSREDAWLERSRATLAKAQPGARAEAVGRVEHVADGIALVSGLPDVRLNELLRFEGDRFGFALTLDADTIGAVLLDDADAITAGSIVTGTGQVVQVPVGPGLTGRVVDPLGRPLDGRGAVHADARMPIERPAPSIIERDLVAEPLATGILLIDALFAIGRGQRELIIGDRATGKTAIAIDAIVNQKNSDVICVYVAIGQRASAVERVIAAVREHGAPERCVFVFASSAASAGLQWIAPFSAMTIAEYFRDRGQHALVVIDDLTRHAATHRELALLTREPPGREAYPGDIFYLHARLLERAAKLSPERGGGSLTALPIAETDAGNLSAYIPTNLISITDGQIVLDTGLFAANQRPAIDVGLSVSRVGGKAQMPALRNVSGRLRLDYSQFLELEMFSRFGGLTEARVKAQVVRGERIRALITQPRFTPLRPVDEVALLGALAEGVFDALPVDLLPAIRTRVAAHLDAHGGNAGAVLEDTGTLDATAQALLVAAVRTLAQDCATASATAPPDPPAASAAELPQPDSP.

Residue 174-181 (GDRATGKT) participates in ATP binding. A compositionally biased stretch (low complexity) spans 507 to 522 (TASATAPPDPPAASAA). Residues 507–530 (TASATAPPDPPAASAAELPQPDSP) form a disordered region.

This sequence belongs to the ATPase alpha/beta chains family. In terms of assembly, F-type ATPases have 2 components, CF(1) - the catalytic core - and CF(0) - the membrane proton channel. CF(1) has five subunits: alpha(3), beta(3), gamma(1), delta(1), epsilon(1). CF(0) has three main subunits: a(1), b(2) and c(9-12). The alpha and beta chains form an alternating ring which encloses part of the gamma chain. CF(1) is attached to CF(0) by a central stalk formed by the gamma and epsilon chains, while a peripheral stalk is formed by the delta and b chains.

Its subcellular location is the cell inner membrane. It carries out the reaction ATP + H2O + 4 H(+)(in) = ADP + phosphate + 5 H(+)(out). Its function is as follows. Produces ATP from ADP in the presence of a proton gradient across the membrane. The alpha chain is a regulatory subunit. This chain is ATP synthase subunit alpha 3, found in Paraburkholderia xenovorans (strain LB400).